The following is a 595-amino-acid chain: Metacaspase-1 (595 aa).

Residues H411 and C466 contribute to the active site.

It belongs to the peptidase C14B family. As to quaternary structure, monomer.

With respect to regulation, activated by Ca(2+). Its function is as follows. Cysteine protease that cleaves specifically after arginine or lysine residues. This Plasmodium berghei (strain Anka) protein is Metacaspase-1.